The following is a 510-amino-acid chain: Ribonuclease Y (510 aa).

A helical transmembrane segment spans residues 2–22 (IYIIFSSIFAGFILGFLVRVF). The KH domain occupies 198–258 (TVASVELPND…IRKELAKRTL (61 aa)). The HD domain maps to 324–419 (VLSHSKETAI…VQIADAISAS (96 aa)).

The protein belongs to the RNase Y family.

The protein resides in the cell membrane. Endoribonuclease that initiates mRNA decay. The sequence is that of Ribonuclease Y from Borreliella burgdorferi (strain ATCC 35210 / DSM 4680 / CIP 102532 / B31) (Borrelia burgdorferi).